A 144-amino-acid chain; its full sequence is uncharacterized protein (144 aa).

The chain crosses the membrane as a helical span at residues 72-90 (VAIGTSLIVGAGVAMEVSV).

It to yeast YCL21w.

The protein resides in the membrane. This is an uncharacterized protein from Saccharomyces cerevisiae (strain ATCC 204508 / S288c) (Baker's yeast).